The primary structure comprises 304 residues: MNGIIPLWKERGMTSHDCVFKLRKILHTKKVGHTGTLDPEVEGVLPICIGRATKLAEYVTDEGKVYVAEITLGKSTTTEDATGETVATKELAEISAEELQAALTKLTGKITQIPPMFSAVKVNGKKLYEYARAGIEVERPSRQVDIYSLVRLDGVSPLTESNPTFKLEISCGKGTYIRTLAVMIGELLGYPAHMSKLERTRSGFFKKEDCLTLAEIDEKMQANDTDFLYPLEKGIESMAKLEIDEEIHAKVLNGVLLPKSLFQTVENEPRVALIFQEKLTAIYKPHPEKQDLFKPEKVIELQQA.

The active-site Nucleophile is the aspartate 38.

Belongs to the pseudouridine synthase TruB family. Type 1 subfamily.

The enzyme catalyses uridine(55) in tRNA = pseudouridine(55) in tRNA. Its function is as follows. Responsible for synthesis of pseudouridine from uracil-55 in the psi GC loop of transfer RNAs. This is tRNA pseudouridine synthase B from Listeria innocua serovar 6a (strain ATCC BAA-680 / CLIP 11262).